Here is a 584-residue protein sequence, read N- to C-terminus: ATP-dependent ubiquitin transferase-like protein Cap2 (584 aa).

The tract at residues Met-1–Glu-137 is E2-like domain. The For E2-like domain role is filled by Cys-90. Residues Gly-138–Asp-338 are linker domain. An adenylation plus E1-like domain region spans residues Val-339–Glu-584. The active-site For E1-like domain is the Cys-522.

The protein in the C-terminal section; belongs to the HesA/MoeB/ThiF family. In terms of assembly, interacts with CD-NTase DncV in the presence and absence of phage T2. A Cap2 dimer is bound on either side by a DncV monomer.

CD-NTase priming component of a CBASS antiviral system. CBASS (cyclic oligonucleotide-based antiphage signaling system) provides immunity against bacteriophages. The CD-NTase protein (DncV) synthesizes cyclic nucleotides in response to infection; these serve as specific second messenger signals. The signals activate a diverse range of effectors, leading to bacterial cell death and thus abortive phage infection. A type II-A(GA) CBASS system. Functionally, primes DncV; acts as a protein transferase, conjugating DncV, the CD-NTase, to unidentified target(s) in the cell via an E1-E2 ubiquitin transferase-like mechanism. During the conjugation reaction DncV is probably transiently attached to AMP. Protein conjugation requires ATP. In terms of biological role, protects E.coli against phage infection. When the CBASS operon (capV-dncV-cap2-cap3) is introduced in E.coli MG1655 there is about 100-fold protection against phages P1 and T2. When the operon is introduced in E.coli MG1655 there is a more than 10(3) decrease in the efficiency of T2 plaque formation. Protects 100-fold against phage T5, offers no protection against T7. When the operon is introduced in E.coli MG1655 it protects against phages T2, T4, T5 and T6. Another paper shows the operon confers protection against phages P1, T2, T5 and T6 but not T4 or lambda. The chain is ATP-dependent ubiquitin transferase-like protein Cap2 from Vibrio cholerae serotype O1 (strain ATCC 39315 / El Tor Inaba N16961).